The sequence spans 281 residues: Pseudouridine-5'-phosphate glycosidase (281 aa).

E9 functions as the Proton donor in the catalytic mechanism. Substrate contacts are provided by K69 and V89. D118 contacts Mn(2+). Residue 120–122 (SAD) participates in substrate binding. Residue K139 is the Nucleophile of the active site.

It belongs to the pseudouridine-5'-phosphate glycosidase family. Homotrimer. Requires Mn(2+) as cofactor.

It carries out the reaction D-ribose 5-phosphate + uracil = psi-UMP + H2O. Catalyzes the reversible cleavage of pseudouridine 5'-phosphate (PsiMP) to ribose 5-phosphate and uracil. Functions biologically in the cleavage direction, as part of a pseudouridine degradation pathway. The chain is Pseudouridine-5'-phosphate glycosidase from Thermus thermophilus (strain ATCC BAA-163 / DSM 7039 / HB27).